A 245-amino-acid polypeptide reads, in one-letter code: Eukaryotic translation initiation factor 3 subunit K (245 aa).

The region spanning 46–227 is the PCI domain; that stretch reads YDCYANLALL…EAKGTVVREN (182 aa).

It belongs to the eIF-3 subunit K family. Component of the eukaryotic translation initiation factor 3 (eIF-3) complex.

It localises to the cytoplasm. Functionally, component of the eukaryotic translation initiation factor 3 (eIF-3) complex, which is involved in protein synthesis of a specialized repertoire of mRNAs and, together with other initiation factors, stimulates binding of mRNA and methionyl-tRNAi to the 40S ribosome. The eIF-3 complex specifically targets and initiates translation of a subset of mRNAs involved in cell proliferation. This Sclerotinia sclerotiorum (strain ATCC 18683 / 1980 / Ss-1) (White mold) protein is Eukaryotic translation initiation factor 3 subunit K.